The chain runs to 332 residues: UPF0194 membrane protein YbhG (332 aa).

An N-terminal signal peptide occupies residues 1–16 (MMKKPVVIGLAVVVLA). Residues 108 to 211 (EEIAQAAAAV…LQDSTLVAPS (104 aa)) are a coiled coil.

It belongs to the UPF0194 family.

The protein localises to the periplasm. The chain is UPF0194 membrane protein YbhG from Escherichia coli O6:H1 (strain CFT073 / ATCC 700928 / UPEC).